The following is a 1034-amino-acid chain: Potassium-transporting ATPase alpha chain 1 (1034 aa).

Residues 2 to 97 are Cytoplasmic-facing; it reads GKAENYELYQ…NALRPPRGTP (96 aa). Phosphotyrosine occurs at positions 7 and 10. A disordered region spans residues 13–40; that stretch reads ELGPGPSGDMAAKMSKKKAGRGGGKRKE. The span at 26-39 shows a compositional bias: basic residues; sequence MSKKKAGRGGGKRK. Serine 27 carries the post-translational modification Phosphoserine; by PKA and PKC. The chain crosses the membrane as a helical span at residues 98–118; sequence EYVKFARQLAGGLQCLMWVAA. Residues 119 to 141 lie on the Lumenal side of the membrane; it reads AICLIAFAIQASEGDLTTDDNLY. Residues 142–162 traverse the membrane as a helical segment; that stretch reads LALALIAVVVVTGCFGYYQEF. Topologically, residues 163–298 are cytoplasmic; the sequence is KSTNIIASFK…NEKTPIAIEI (136 aa). A disordered region spans residues 222–244; the sequence is KVDNSSLTGESEPQTRSPECTHE. Over residues 225–239 the composition is skewed to polar residues; that stretch reads NSSLTGESEPQTRSP. A helical membrane pass occupies residues 299–318; the sequence is EHFVDIIAGLAILFGATFFI. Residues 319–330 are Lumenal-facing; the sequence is VAMCIGYTFLRA. Residues 331–348 form a helical membrane-spanning segment; that stretch reads MVFFMAIVVAYVPEGLLA. The K(+) site is built by valine 339, alanine 340, valine 342, and glutamate 344. Residues 349–782 lie on the Cytoplasmic side of the membrane; it reads TVTVCLSLTA…EQGRLIFDNL (434 aa). The 4-aspartylphosphate intermediate role is filled by aspartate 386. Aspartate 386 and threonine 388 together coordinate Mg(2+). Residues serine 462 and serine 600 each carry the phosphoserine modification. Mg(2+) is bound by residues aspartate 727 and aspartate 731. A helical transmembrane segment spans residues 783-802; the sequence is KKSIAYTLTKNIPELTPYLI. Glutamate 796 is a binding site for K(+). The Lumenal segment spans residues 803-812; the sequence is YITVSVPLPL. The helical transmembrane segment at 813 to 833 threads the bilayer; that stretch reads GCITILFIELCTDIFPSVSLA. A K(+)-binding site is contributed by glutamate 821. Residues 834 to 853 lie on the Cytoplasmic side of the membrane; the sequence is YEKAESDIMHLRPRNPKRDR. Position 839 is a phosphoserine (serine 839). A helical transmembrane segment spans residues 854–876; that stretch reads LVNEPLAAYSYFQIGAIQSFAGF. Topologically, residues 877 to 928 are lumenal; sequence TDYFTAMAQEGWFPLLCVGLRPQWENHHLQDLQDSYGQEWTFGQRLYQQYTC. A helical membrane pass occupies residues 929 to 948; the sequence is YTVFFISIEMCQIADVLIRK. Topologically, residues 949–962 are cytoplasmic; the sequence is TRRLSAFQQGFFRN. Residue serine 953 is modified to Phosphoserine; by PKA. The helical transmembrane segment at 963 to 981 threads the bilayer; it reads RILVIAIVFQVCIGCFLCY. Over 982 to 996 the chain is Lumenal; that stretch reads CPGMPNIFNFMPIRF. A helical membrane pass occupies residues 997-1017; it reads QWWLVPMPFGLLIFVYDEIRK. Over 1018 to 1034 the chain is Cytoplasmic; that stretch reads LGVRCCPGSWWDQELYY.

The protein belongs to the cation transport ATPase (P-type) (TC 3.A.3) family. Type IIC subfamily. The gastric H(+)/K(+) ATPase pump is composed of the catalytic alpha subunit ATP4A and the regulatory beta subunit ATP4B. Interacts (via the P-domain) with ATP4B (via N-terminus); this interaction stabilizes the lumenal-open E2 conformation state and prevents the reverse reaction of the transport cycle.

It is found in the apical cell membrane. Its subcellular location is the cell membrane. It catalyses the reaction K(+)(out) + ATP + H2O + H(+)(in) = K(+)(in) + ADP + phosphate + 2 H(+)(out). Its activity is regulated as follows. Down-regulated by K(+)-competitive acid blockers (P-CABs) such as vonoprazan. Its function is as follows. The catalytic subunit of the gastric H(+)/K(+) ATPase pump which transports H(+) ions in exchange for K(+) ions across the apical membrane of parietal cells. Uses ATP as an energy source to pump H(+) ions to the gastric lumen while transporting K(+) ion from the lumen into the cell. Remarkably generates a million-fold proton gradient across the gastric parietal cell membrane, acidifying the gastric juice down to pH 1. Within a transport cycle, the transfer of a H(+) ion across the membrane is coupled to ATP hydrolysis and is associated with a transient phosphorylation that shifts the pump conformation from inward-facing (E1) to outward-facing state (E2). The release of the H(+) ion in the stomach lumen is followed by binding of K(+) ion converting the pump conformation back to the E1 state. The chain is Potassium-transporting ATPase alpha chain 1 (ATP4A) from Sus scrofa (Pig).